Consider the following 1554-residue polypeptide: Myosin-2 (1554 aa).

The 54-residue stretch at 4-57 folds into the Myosin N-terminal SH3-like domain; sequence EVGTRCWYPDKQQGWIGGEITKHTNLSNKHQLELTLEDNQIVEIESETLDETKD. Residues 70-774 enclose the Myosin motor domain; it reads EATEDLTSLS…MLAYLEKLRS (705 aa). 164 to 171 contacts ATP; the sequence is GESGAGKT. The segment at 443–523 is actin-binding; sequence FIGVLDIYGF…LGILSLLDEE (81 aa). 6 IQ domains span residues 778-798, 800-824, 825-847, 848-872, 873-895, and 896-925; these read HNSSVLIQKKVKAVYYRKKYL, IISSIRNFHSRSEGFLTRQRVDLEF, KTQAAILIQSMVRSTSTRNKTIS, LLSAITRLQSLVRKQLAQKELLQRR, QRDAAVSIQKKIRAFEPRQSFNT, and TRRSTVVVQSLVRKKFAQKKLKDLKTEAKS. The stretch at 926-1079 forms a coiled coil; the sequence is VNHLKEVSYK…IARLQAAVRS (154 aa). Residues 1080 to 1554 are non alpha-helical, tail domain; sequence GVTSSTITST…VTVQESQRTE (475 aa). The segment covering 1082-1093 has biased composition (low complexity); that stretch reads TSSTITSTPTAS. The disordered stretch occupies residues 1082–1109; the sequence is TSSTITSTPTASRRFSAHSSVADGTSPR. Residues 1098-1109 are compositionally biased toward polar residues; that stretch reads AHSSVADGTSPR. The Dilute domain maps to 1205–1480; it reads AEVLSTIQKL…LNFVADRVKK (276 aa).

Belongs to the TRAFAC class myosin-kinesin ATPase superfamily. Myosin family. In terms of assembly, homodimer. Interacts with calmodulin (CMD1) and the myosin light chain MLC1 through its IQ repeats.

Its function is as follows. Myosin heavy chain that is required for the cell cycle-regulated transport of various organelles and proteins for their segregation. Functions by binding with its tail domain to receptor proteins on organelles and exerting force with its N-terminal motor domain against actin filaments, thereby transporting its cargo along polarized actin cables. This Lachancea kluyveri (strain ATCC 58438 / CBS 3082 / BCRC 21498 / NBRC 1685 / JCM 7257 / NCYC 543 / NRRL Y-12651) (Yeast) protein is Myosin-2 (MYO2).